Consider the following 253-residue polypeptide: DNA repair protein RecO (253 aa).

This sequence belongs to the RecO family.

Involved in DNA repair and RecF pathway recombination. The protein is DNA repair protein RecO of Streptococcus agalactiae serotype Ia (strain ATCC 27591 / A909 / CDC SS700).